The following is a 630-amino-acid chain: Triacylglycerol lipase ptl2 (630 aa).

The PNPLA domain maps to 251–442 (LCLSGGASFA…RTDIPLSELR (192 aa)). The short motif at 282–286 (GTSGG) is the GXSXG element. Catalysis depends on S284, which acts as the Nucleophile. The active-site Proton acceptor is the D429.

The protein belongs to the PLPL family.

The protein localises to the lipid droplet. It catalyses the reaction a triacylglycerol + H2O = a diacylglycerol + a fatty acid + H(+). Lipid particle-localized triacylglycerol (TAG) lipase. The lipid droplet/particle is a lipid storage compartment which serves as a depot of energy and building blocks for membrane lipid biosynthesis. Involved in the mobilization of the non-polar storage lipids triacylglycerols (TAGs) from lipid particles by hydrolysis of TAGs, releasing and supplying specific fatty acids to the appropriate metabolic pathways. The sequence is that of Triacylglycerol lipase ptl2 (ptl2) from Schizosaccharomyces pombe (strain 972 / ATCC 24843) (Fission yeast).